A 1591-amino-acid chain; its full sequence is GATOR1 complex protein DEPDC5 (1591 aa).

Disordered regions lie at residues 427–455, 478–532, and 695–720; these read GKKS…TLPI, LATC…STNI, and LSNS…STSP. The segment covering 430 to 439 has biased composition (basic and acidic residues); it reads SASEKTKNGR. A compositionally biased stretch (low complexity) spans 494-508; the sequence is SASSCDVSSSPSLPS. Ser-505 is subject to Phosphoserine. Polar residues predominate over residues 518–532; that stretch reads SQASDDSSLGKSTNI. Residue Ser-992 is modified to Phosphoserine. Disordered regions lie at residues 1040–1064 and 1118–1153; these read SQKS…ENSS and STGQ…SSQQ. Residues 1118–1149 are compositionally biased toward polar residues; that stretch reads STGQPMDRGNNQTFGNSQNIEQAFPSANSGDY. A DEP domain is found at 1175-1250; that stretch reads PSTGVQLLSE…YGFYFYKIVM (76 aa). Position 1518 is a phosphoserine (Ser-1518).

It belongs to the IML1 family. As to quaternary structure, within the GATOR complex, component of the GATOR1 subcomplex, made of DEPDC5, NPRL2 and NPRL3. GATOR1 mediates the strong interaction of the GATOR complex with small GTPases Rag (RagA/RRAGA, RagB/RRAGB, RagC/RRAGC and/or RagD/RRAGD) heterodimers. GATOR1 interacts with GPR155/LYCHOS; interaction takes place in presence of cholesterol and prevents interaction between GATOR1 and KICSTOR. Interacts with SAMTOR; interaction is direct and takes place in presence of methionine, leading to inhibit the activity of the GATOR1 complex. Post-translationally, phosphorylation at Ser-992 and Ser-1518 by AKT1 and PIM1 inhibit the activity of DEPDC5, releasing inhibition of the mTORC1 pathway. Ubiquitinated. Amino acid-induced 'Lys-48'-linked polyubiquitination of DEPDC5 by the BCR(KLHL22) ubiquitin ligase complex leads to DEPDC5 proteasomal degradation and inhibition of the GATOR1 complex. Ubiquitination may occur at multiple lysines. In terms of tissue distribution, expressed at low levels in all brain regions. Expressed throughout brain development, including in midgestation embryonic head (11.5 dpc), neonatal brain and whole adult brain. Present in neurons and absent in non-neuronal cells, including astrocytes (at protein level).

The protein localises to the lysosome membrane. It localises to the cytoplasm. The protein resides in the cytosol. Its subcellular location is the perinuclear region. Its function is as follows. As a component of the GATOR1 complex functions as an inhibitor of the amino acid-sensing branch of the mTORC1 pathway. In response to amino acid depletion, the GATOR1 complex has GTPase activating protein (GAP) activity and strongly increases GTP hydrolysis by RagA/RRAGA (or RagB/RRAGB) within heterodimeric Rag complexes, thereby turning them into their inactive GDP-bound form, releasing mTORC1 from lysosomal surface and inhibiting mTORC1 signaling. In the presence of abundant amino acids, the GATOR1 complex is negatively regulated by GATOR2, the other GATOR subcomplex, in this amino acid-sensing branch of the TORC1 pathway. Within the GATOR1 complex, DEPDC5 mediates direct interaction with the nucleotide-binding pocket of small GTPases Rag (RagA/RRAGA, RagB/RRAGB, RagC/RRAGC and/or RagD/RRAGD) and coordinates their nucleotide loading states by promoting RagA/RRAGA or RagB/RRAGB into their GDP-binding state and RagC/RRAGC or RagD/RRAGD into their GTP-binding state. However, it does not execute the GAP activity, which is mediated by NPRL2. The polypeptide is GATOR1 complex protein DEPDC5 (Mus musculus (Mouse)).